The sequence spans 614 residues: FAD-linked oxidoreductase ffsJ (614 aa).

The signal sequence occupies residues 1-19 (MRLTRALTPAILALPAAHA). 4 N-linked (GlcNAc...) asparagine glycosylation sites follow: asparagine 30, asparagine 53, asparagine 72, and asparagine 114. One can recognise an FAD-binding PCMH-type domain in the interval 119–301 (TGSLPAYYID…LSSTHRVEPE (183 aa)). Residues asparagine 314, asparagine 329, asparagine 461, asparagine 465, asparagine 478, and asparagine 514 are each glycosylated (N-linked (GlcNAc...) asparagine). Residues 453 to 495 (NGHGRSNNNNSNNSSTSTSTSTSSKNGSVKPYAYGGKETTSST) are disordered. Residues 456–480 (GRSNNNNSNNSSTSTSTSTSSKNGS) show a composition bias toward low complexity.

The protein belongs to the oxygen-dependent FAD-linked oxidoreductase family. It depends on FAD as a cofactor.

It participates in mycotoxin biosynthesis. In terms of biological role, FAD-linked oxidoreductase; part of the gene cluster that mediates the biosynthesis of the cytotoxic leucine-containing cytochalasans, including aspochalasin C, aspochalasin E, TMC-169, flavichalasine F, aspergillin PZ, aspochalasin M and flavichalasine G. The first step in the pathway is catalyzed by the hybrid PKS-NRPS ffsA that utilizes 8 units of malonyl-CoA to iteratively assemble the octaketide chain before addition of L-leucine by the C-terminal NRPS modules. Because ffsA lacks a designated enoylreductase (ER) domain, the required activity is provided the enoyl reductase fssC. The methyltransferase (MT) domain of ffsA catalyzes the alpha-methylation at C10 and C14 using S-adenosyl-L-methionine as the methyl-donating cosubstrate. Reduction by the hydrolyase ffsE, followed by dehydration and intra-molecular Diels-Alder cyclization by the Diels-Alderase ffsF then yield the required isoindolone-fused macrocycle. A number of oxidative steps catalyzed by the tailoring cytochrome P450 monooxygenase ffsD, the FAD-linked oxidoreductase ffsJ and the short-chain dehydrogenase/reductase ffsI, are further required to afford the final products. This Aspergillus flavipes protein is FAD-linked oxidoreductase ffsJ.